Consider the following 201-residue polypeptide: Two-component response regulator ORR9 (201 aa).

The Response regulatory domain maps to 10 to 142 (HVLAVDDSLP…DMSKLKPHIL (133 aa)). 4-aspartylphosphate is present on Asp75. Positions 149–201 (HYQQEQNLQSNSESNNSSNPTSENSSSSTSSNSHKRKAVDEEILPHTIRPRHS) are disordered. Residues 158–180 (SNSESNNSSNPTSENSSSSTSSN) are compositionally biased toward low complexity.

Belongs to the ARR family. Type-A subfamily. Two-component system major event consists of a His-to-Asp phosphorelay between a sensor histidine kinase (HK) and a response regulator (RR). In plants, the His-to-Asp phosphorelay involves an additional intermediate named Histidine-containing phosphotransfer protein (HPt). This multistep phosphorelay consists of a His-Asp-His-Asp sequential transfer of a phosphate group between first a His and an Asp of the HK protein, followed by the transfer to a conserved His of the HPt protein and finally the transfer to an Asp in the receiver domain of the RR protein.

Its function is as follows. Functions as a response regulator involved in His-to-Asp phosphorelay signal transduction system. Phosphorylation of the Asp residue in the receiver domain activates the ability of the protein to promote the transcription of target genes. Type-A response regulators seem to act as negative regulators of the cytokinin signaling. In Oryza sativa subsp. japonica (Rice), this protein is Two-component response regulator ORR9.